Consider the following 334-residue polypeptide: Probable GTP 3',8-cyclase (334 aa).

Residues 24-256 (PYGRKVTGLR…RKKYMIDGVE (233 aa)) form the Radical SAM core domain. R33 lines the GTP pocket. Residues C40 and C44 each coordinate [4Fe-4S] cluster. Y46 provides a ligand contact to S-adenosyl-L-methionine. C47 is a binding site for [4Fe-4S] cluster. K85 lines the GTP pocket. S-adenosyl-L-methionine is bound at residue G89. T113 is a GTP binding site. S137 contributes to the S-adenosyl-L-methionine binding site. Position 176 (K176) interacts with GTP. Positions 269 and 272 each coordinate [4Fe-4S] cluster. 274–276 (RLR) is a binding site for GTP. C286 contacts [4Fe-4S] cluster.

This sequence belongs to the radical SAM superfamily. MoaA family. [4Fe-4S] cluster is required as a cofactor.

It catalyses the reaction GTP + AH2 + S-adenosyl-L-methionine = (8S)-3',8-cyclo-7,8-dihydroguanosine 5'-triphosphate + 5'-deoxyadenosine + L-methionine + A + H(+). It participates in cofactor biosynthesis; molybdopterin biosynthesis. In terms of biological role, catalyzes the cyclization of GTP to (8S)-3',8-cyclo-7,8-dihydroguanosine 5'-triphosphate. The protein is Probable GTP 3',8-cyclase of Methanosarcina mazei (strain ATCC BAA-159 / DSM 3647 / Goe1 / Go1 / JCM 11833 / OCM 88) (Methanosarcina frisia).